The sequence spans 220 residues: MAGLSRGSARALLAALLASTLLALLVSPARGRGGRDHGDWDEASRLPPLPPREDAARVARFVTHVSDWGALATISTLEAVRGRPFADVLSLSDGPPGAGSGVPYFYLSPLQLSVSNLQENPYATLTMTLAQTNFCKKHGFDPQSPLCVHIMLSGTVTKVNETEMDIAKHSLFIRHPEMKTWPSSHNWFFAKLNITNIWVLDYFGGPKIVTPEEYYNVTVQ.

Positions 1 to 31 (MAGLSRGSARALLAALLASTLLALLVSPARG) are cleaved as a signal peptide. Asn160, Asn193, and Asn216 each carry an N-linked (GlcNAc...) asparagine glycan.

It belongs to the CREG family. As to quaternary structure, homodimer. Interacts with IGF2R; the interaction is dependent on glycosylation. N-glycosylated.

It localises to the secreted. In terms of biological role, may contribute to the transcriptional control of cell growth and differentiation. Antagonizes transcriptional activation and cellular transformation by the adenovirus E1A protein. The transcriptional control activity of cell growth requires interaction with IGF2R. The sequence is that of Protein CREG1 (CREG1) from Homo sapiens (Human).